Here is an 836-residue protein sequence, read N- to C-terminus: Spliceosome associated factor 3, U4/U6 recycling protein (836 aa).

HAT repeat units follow at residues 127 to 163 (EDFKFCRDVCSKALENLGTRYDSGGHIWLIFLEYEMS), 296 to 329 (KLPQVAVKVYSRALRHCPYSFVLHQQALLAFERD), 331 to 367 (RPNEEIDALWERARSNVINSAEEGRSLYRTYAFLLRR), 418 to 451 (KNMDKCRNIWNDILASGFGRFAGKWIEAVRLERQ), and 453 to 486 (GDKENARKYLNKALNSVSDNINEIYMYYVQFERE). The segment at 507–585 (RAIRPQKKVS…APGSFAVQKA (79 aa)) is disordered. Over residues 540–550 (IVKKVKGDDGG) the composition is skewed to basic and acidic residues. Residues 558 to 579 (SNAKSSSAVSSSNASSTPAPGS) show a composition bias toward low complexity. 2 consecutive RRM domains span residues 593-668 (RTIF…ANDP) and 683-760 (SKVF…LSNP). 2 disordered regions span residues 757–786 (LSNPPVKKDKSHGKPAAIGASLEEDGPRKG) and 811–830 (AMDVSEGTSTSQPLSNDQFR). The segment covering 816–827 (EGTSTSQPLSND) has biased composition (polar residues).

As to quaternary structure, forms a complex composed of sart-3, terminal uridylyltransferase usip-1 and U6 snRNA; complex formation is mediated by usip-1 and sart-3 binding to U6 snRNA. Associates with U4 and U6 snRNP complexes, probably by interacting with U4 and U6 snRNAs. As to expression, ubiquitously expressed.

It localises to the nucleus. The protein localises to the nucleoplasm. U6 snRNP-binding protein that functions as a recycling factor of the splicing machinery. Promotes the initial reassembly of U4 and U6 snRNPs following their ejection from the spliceosome during its maturation. This chain is Spliceosome associated factor 3, U4/U6 recycling protein, found in Caenorhabditis elegans.